Reading from the N-terminus, the 68-residue chain is Beta-defensin 1 (68 aa).

Residues 1–21 (MRTSYLLLFTLCLLLSEMASG) form the signal peptide. The propeptide occupies 22–32 (DNFLTGLGHRS). Intrachain disulfides connect C37/C66, C44/C59, and C49/C67.

It belongs to the beta-defensin family. In terms of assembly, monomer. Homodimer.

The protein localises to the secreted. Its subcellular location is the membrane. Its function is as follows. Has bactericidal activity. May act as a ligand for C-C chemokine receptor CCR6. Positively regulates the sperm motility and bactericidal activity in a CCR6-dependent manner. Binds to CCR6 and triggers Ca2+ mobilization in the sperm which is important for its motility. The chain is Beta-defensin 1 (DEFB1) from Cercopithecus erythrogaster (Red-bellied monkey).